The primary structure comprises 404 residues: Formate-dependent phosphoribosylglycinamide formyltransferase (404 aa).

Residues 25–26 and Glu-85 contribute to the N(1)-(5-phospho-beta-D-ribosyl)glycinamide site; that span reads EL. Residues Arg-118, Lys-159, 164–169, 199–202, and Glu-207 each bind ATP; these read SSGKGQ and EGFI. The ATP-grasp domain occupies 123–318; sequence RLAAEELGLP…EFELHARAIL (196 aa). The Mg(2+) site is built by Glu-277 and Glu-289. N(1)-(5-phospho-beta-D-ribosyl)glycinamide contacts are provided by residues Asp-296, Lys-365, and 372 to 373; that span reads RR.

It belongs to the PurK/PurT family. In terms of assembly, homodimer.

The enzyme catalyses N(1)-(5-phospho-beta-D-ribosyl)glycinamide + formate + ATP = N(2)-formyl-N(1)-(5-phospho-beta-D-ribosyl)glycinamide + ADP + phosphate + H(+). Its pathway is purine metabolism; IMP biosynthesis via de novo pathway; N(2)-formyl-N(1)-(5-phospho-D-ribosyl)glycinamide from N(1)-(5-phospho-D-ribosyl)glycinamide (formate route): step 1/1. Functionally, involved in the de novo purine biosynthesis. Catalyzes the transfer of formate to 5-phospho-ribosyl-glycinamide (GAR), producing 5-phospho-ribosyl-N-formylglycinamide (FGAR). Formate is provided by PurU via hydrolysis of 10-formyl-tetrahydrofolate. This is Formate-dependent phosphoribosylglycinamide formyltransferase from Burkholderia lata (strain ATCC 17760 / DSM 23089 / LMG 22485 / NCIMB 9086 / R18194 / 383).